Here is a 495-residue protein sequence, read N- to C-terminus: UDP-N-acetylmuramoyl-L-alanyl-D-glutamate--2,6-diaminopimelate ligase (495 aa).

UDP-N-acetyl-alpha-D-muramoyl-L-alanyl-D-glutamate contacts are provided by residues leucine 27, serine 29, and 44-46; that span reads HKA. 116 to 122 is a binding site for ATP; it reads GTNGKTT. UDP-N-acetyl-alpha-D-muramoyl-L-alanyl-D-glutamate contacts are provided by residues asparagine 157, 158-159, serine 185, glutamine 191, and arginine 193; that span reads TT. Lysine 225 is modified (N6-carboxylysine). Meso-2,6-diaminopimelate is bound by residues arginine 390, 414–417, glycine 465, and glutamate 469; that span reads DNPR. Residues 414 to 417 carry the Meso-diaminopimelate recognition motif motif; the sequence is DNPR.

It belongs to the MurCDEF family. MurE subfamily. Mg(2+) is required as a cofactor. Post-translationally, carboxylation is probably crucial for Mg(2+) binding and, consequently, for the gamma-phosphate positioning of ATP.

The protein localises to the cytoplasm. It carries out the reaction UDP-N-acetyl-alpha-D-muramoyl-L-alanyl-D-glutamate + meso-2,6-diaminopimelate + ATP = UDP-N-acetyl-alpha-D-muramoyl-L-alanyl-gamma-D-glutamyl-meso-2,6-diaminopimelate + ADP + phosphate + H(+). The protein operates within cell wall biogenesis; peptidoglycan biosynthesis. Functionally, catalyzes the addition of meso-diaminopimelic acid to the nucleotide precursor UDP-N-acetylmuramoyl-L-alanyl-D-glutamate (UMAG) in the biosynthesis of bacterial cell-wall peptidoglycan. The chain is UDP-N-acetylmuramoyl-L-alanyl-D-glutamate--2,6-diaminopimelate ligase from Pectobacterium atrosepticum (strain SCRI 1043 / ATCC BAA-672) (Erwinia carotovora subsp. atroseptica).